The chain runs to 387 residues: Zinc homeostasis factor 1 (387 aa).

4 consecutive transmembrane segments (helical) span residues 10 to 30 (IILL…TGYA), 34 to 54 (LALI…LVAL), 77 to 97 (EILG…FIFM), and 113 to 133 (TLMF…IFLF). Polar residues predominate over residues 195-214 (SYTGNHNGAGTSKPVNNHGS). Positions 195 to 221 (SYTGNHNGAGTSKPVNNHGSIEQDAPK) are disordered. A run of 2 helical transmembrane segments spans residues 234 to 254 (FLHV…ALFI) and 263 to 283 (FLFD…SAIP).

The protein belongs to the cation diffusion facilitator (CDF) transporter (TC 2.A.4) family. SLC30A subfamily.

The protein resides in the endoplasmic reticulum membrane. Its subcellular location is the nucleus membrane. Functionally, involved in zinc homeostasis, where it plays a role in its accumulation in the endoplasmic reticulum/nucleus. Also has a role in the sequestration of cadmium into the endoplasmic reticulum. This Schizosaccharomyces pombe (strain 972 / ATCC 24843) (Fission yeast) protein is Zinc homeostasis factor 1 (zhf1).